The primary structure comprises 150 residues: Ribosomal RNA large subunit methyltransferase H (150 aa).

S-adenosyl-L-methionine-binding positions include alanine 100 and 118 to 123 (LSEMTF).

This sequence belongs to the RNA methyltransferase RlmH family. In terms of assembly, homodimer.

Its subcellular location is the cytoplasm. It catalyses the reaction pseudouridine(1915) in 23S rRNA + S-adenosyl-L-methionine = N(3)-methylpseudouridine(1915) in 23S rRNA + S-adenosyl-L-homocysteine + H(+). Functionally, specifically methylates the pseudouridine at position 1915 (m3Psi1915) in 23S rRNA. The polypeptide is Ribosomal RNA large subunit methyltransferase H (Helicobacter pylori (strain Shi470)).